Consider the following 154-residue polypeptide: Myoglobin (154 aa).

In terms of domain architecture, Globin spans 2–148 (GLSDGEWQLV…FRNDIAAKYK (147 aa)). The residue at position 4 (serine 4) is a Phosphoserine. Histidine 65 is a binding site for nitrite. An O2-binding site is contributed by histidine 65. Threonine 68 carries the phosphothreonine modification. Residue histidine 94 coordinates heme b.

Belongs to the globin family. As to quaternary structure, monomeric.

It is found in the cytoplasm. It localises to the sarcoplasm. It catalyses the reaction Fe(III)-heme b-[protein] + nitric oxide + H2O = Fe(II)-heme b-[protein] + nitrite + 2 H(+). The enzyme catalyses H2O2 + AH2 = A + 2 H2O. Its function is as follows. Monomeric heme protein which primary function is to store oxygen and facilitate its diffusion within muscle tissues. Reversibly binds oxygen through a pentacoordinated heme iron and enables its timely and efficient release as needed during periods of heightened demand. Depending on the oxidative conditions of tissues and cells, and in addition to its ability to bind oxygen, it also has a nitrite reductase activity whereby it regulates the production of bioactive nitric oxide. Under stress conditions, like hypoxia and anoxia, it also protects cells against reactive oxygen species thanks to its pseudoperoxidase activity. The protein is Myoglobin (MB) of Otolemur crassicaudatus (Brown greater galago).